Reading from the N-terminus, the 544-residue chain is Chaperonin GroEL 1 (544 aa).

Residues 29-32 (TLGP), 86-90 (DGTTT), Gly413, and Asp495 contribute to the ATP site. The segment at 525–544 (PEPKTNTPASSGSGMSDYDY) is disordered. Positions 528–538 (KTNTPASSGSG) are enriched in polar residues.

It belongs to the chaperonin (HSP60) family. In terms of assembly, forms a cylinder of 14 subunits composed of two heptameric rings stacked back-to-back. Interacts with the co-chaperonin GroES.

It is found in the cytoplasm. It carries out the reaction ATP + H2O + a folded polypeptide = ADP + phosphate + an unfolded polypeptide.. Together with its co-chaperonin GroES, plays an essential role in assisting protein folding. The GroEL-GroES system forms a nano-cage that allows encapsulation of the non-native substrate proteins and provides a physical environment optimized to promote and accelerate protein folding. The protein is Chaperonin GroEL 1 of Synechococcus sp. (strain JA-2-3B'a(2-13)) (Cyanobacteria bacterium Yellowstone B-Prime).